Consider the following 148-residue polypeptide: MKIAIGCDEMGYELKQTLITRLKEKNIEFTDFGSFENEKVLYPSIAEKVALEVKNNDYDRGILICGTGIGMAITANKIHGIRAAQIHDSYSAERARKSNDAHIMTMGALVIGPSLAVSLLDTWLDSDFSGGRSQAKVDLMEEIDQKNR.

8–9 lines the D-ribulose 5-phosphate pocket; it reads DE. Catalysis depends on Cys-65, which acts as the Proton acceptor. Residues 66–70, Asn-99, Arg-132, and Lys-136 contribute to the D-ribulose 5-phosphate site; that span reads GTGIG.

The protein belongs to the LacAB/RpiB family.

It carries out the reaction aldehydo-D-ribose 5-phosphate = D-ribulose 5-phosphate. It functions in the pathway carbohydrate degradation; pentose phosphate pathway; D-ribose 5-phosphate from D-ribulose 5-phosphate (non-oxidative stage): step 1/1. In terms of biological role, catalyzes the interconversion of ribulose-5-P and ribose-5-P. This chain is Ribose-5-P isomerase B, found in Listeria innocua serovar 6a (strain ATCC BAA-680 / CLIP 11262).